The chain runs to 369 residues: Probable peptidoglycan glycosyltransferase FtsW (369 aa).

The next 8 helical transmembrane spans lie at 11 to 31 (LLSV…SSSV), 48 to 68 (NFIH…VPIY), 77 to 97 (LILC…SNHG), 134 to 151 (TSTI…KLLL), 154 to 174 (PDFG…FLIG), 177 to 197 (FLFL…LIYF), 265 to 285 (LGYL…FQGM), and 306 to 326 (ISLL…GILP).

It belongs to the SEDS family. FtsW subfamily.

Its subcellular location is the cell inner membrane. The enzyme catalyses [GlcNAc-(1-&gt;4)-Mur2Ac(oyl-L-Ala-gamma-D-Glu-L-Lys-D-Ala-D-Ala)](n)-di-trans,octa-cis-undecaprenyl diphosphate + beta-D-GlcNAc-(1-&gt;4)-Mur2Ac(oyl-L-Ala-gamma-D-Glu-L-Lys-D-Ala-D-Ala)-di-trans,octa-cis-undecaprenyl diphosphate = [GlcNAc-(1-&gt;4)-Mur2Ac(oyl-L-Ala-gamma-D-Glu-L-Lys-D-Ala-D-Ala)](n+1)-di-trans,octa-cis-undecaprenyl diphosphate + di-trans,octa-cis-undecaprenyl diphosphate + H(+). The protein operates within cell wall biogenesis; peptidoglycan biosynthesis. Functionally, peptidoglycan polymerase that is essential for cell division. In Riesia pediculicola (strain USDA), this protein is Probable peptidoglycan glycosyltransferase FtsW.